Here is a 309-residue protein sequence, read N- to C-terminus: Glutaminase (309 aa).

Substrate is bound by residues S64, N114, E160, N167, Y191, Y243, and V261.

It belongs to the glutaminase family. As to quaternary structure, homotetramer.

It carries out the reaction L-glutamine + H2O = L-glutamate + NH4(+). The polypeptide is Glutaminase (Rhizobium johnstonii (strain DSM 114642 / LMG 32736 / 3841) (Rhizobium leguminosarum bv. viciae)).